Consider the following 258-residue polypeptide: Flap endonuclease Xni (258 aa).

D109 serves as a coordination point for Mg(2+). The region spanning 165–254 is the 5'-3' exonuclease domain; that stretch reads VKPEQLPDYW…GFNLQDIRYL (90 aa). K(+) contacts are provided by L176, A177, P185, I187, and I190. The interaction with DNA stretch occupies residues 189-194; sequence GIGPKA.

The protein belongs to the Xni family. It depends on Mg(2+) as a cofactor. Requires K(+) as cofactor.

Functionally, has flap endonuclease activity. During DNA replication, flap endonucleases cleave the 5'-overhanging flap structure that is generated by displacement synthesis when DNA polymerase encounters the 5'-end of a downstream Okazaki fragment. This chain is Flap endonuclease Xni, found in Photobacterium profundum (strain SS9).